The chain runs to 223 residues: Putative protein phosphatase 2C 63 (223 aa).

Residues Met-1–Gly-22 are disordered. In terms of domain architecture, PPM-type phosphatase spans Met-1 to Val-212.

Belongs to the PP2C family.

The enzyme catalyses O-phospho-L-seryl-[protein] + H2O = L-seryl-[protein] + phosphate. The catalysed reaction is O-phospho-L-threonyl-[protein] + H2O = L-threonyl-[protein] + phosphate. The chain is Putative protein phosphatase 2C 63 from Oryza sativa subsp. japonica (Rice).